A 395-amino-acid chain; its full sequence is Chalcone synthase (395 aa).

An N-acetylvaline modification is found at valine 2. Cysteine 169 is an active-site residue.

It belongs to the thiolase-like superfamily. Chalcone/stilbene synthases family.

It catalyses the reaction (E)-4-coumaroyl-CoA + 3 malonyl-CoA + 3 H(+) = 2',4,4',6'-tetrahydroxychalcone + 3 CO2 + 4 CoA. Its pathway is secondary metabolite biosynthesis; flavonoid biosynthesis. Its function is as follows. The primary product of this enzyme is 4,2',4',6'-tetrahydroxychalcone (also termed naringenin-chalcone or chalcone) which can under specific conditions spontaneously isomerize into naringenin. The protein is Chalcone synthase (CHS) of Cardamine amara (Large bitter-cress).